The chain runs to 339 residues: Glycerol-3-phosphate dehydrogenase [NAD(P)+] (339 aa).

Residues S15, Y16, H36, and K110 each coordinate NADPH. Sn-glycerol 3-phosphate is bound by residues K110, G139, and T141. A143 provides a ligand contact to NADPH. 5 residues coordinate sn-glycerol 3-phosphate: K195, D248, S258, R259, and N260. The active-site Proton acceptor is the K195. Position 259 (R259) interacts with NADPH. NADPH-binding residues include V283 and E285.

It belongs to the NAD-dependent glycerol-3-phosphate dehydrogenase family.

Its subcellular location is the cytoplasm. It carries out the reaction sn-glycerol 3-phosphate + NAD(+) = dihydroxyacetone phosphate + NADH + H(+). The catalysed reaction is sn-glycerol 3-phosphate + NADP(+) = dihydroxyacetone phosphate + NADPH + H(+). It functions in the pathway membrane lipid metabolism; glycerophospholipid metabolism. Its function is as follows. Catalyzes the reduction of the glycolytic intermediate dihydroxyacetone phosphate (DHAP) to sn-glycerol 3-phosphate (G3P), the key precursor for phospholipid synthesis. The polypeptide is Glycerol-3-phosphate dehydrogenase [NAD(P)+] (Serratia proteamaculans (strain 568)).